The chain runs to 165 residues: Endoribonuclease YbeY (165 aa).

Residues His-119, His-123, and His-129 each contribute to the Zn(2+) site.

This sequence belongs to the endoribonuclease YbeY family. It depends on Zn(2+) as a cofactor.

It is found in the cytoplasm. Single strand-specific metallo-endoribonuclease involved in late-stage 70S ribosome quality control and in maturation of the 3' terminus of the 16S rRNA. This chain is Endoribonuclease YbeY, found in Streptomyces griseus subsp. griseus (strain JCM 4626 / CBS 651.72 / NBRC 13350 / KCC S-0626 / ISP 5235).